The following is a 333-amino-acid chain: Probable tRNA pseudouridine synthase B (333 aa).

The Nucleophile role is filled by Asp-66. The region spanning Leu-233–Met-308 is the PUA domain.

The protein belongs to the pseudouridine synthase TruB family. Type 2 subfamily.

It catalyses the reaction uridine(55) in tRNA = pseudouridine(55) in tRNA. Its function is as follows. Could be responsible for synthesis of pseudouridine from uracil-55 in the psi GC loop of transfer RNAs. The sequence is that of Probable tRNA pseudouridine synthase B from Methanococcus maripaludis (strain DSM 14266 / JCM 13030 / NBRC 101832 / S2 / LL).